The sequence spans 249 residues: Putative type I specificity subunit S.MpnORF615P (249 aa).

This sequence belongs to the type-I restriction system S methylase family. The methyltransferase is composed of M and S polypeptides.

Its function is as follows. The specificity (S) subunit of a type I methyltransferase (MTase); this subunit dictates DNA sequence specificity. The single R subunit has multiple frameshifts and is probably not expressed. In Mycoplasma pneumoniae (strain ATCC 29342 / M129 / Subtype 1) (Mycoplasmoides pneumoniae), this protein is Putative type I specificity subunit S.MpnORF615P.